Consider the following 282-residue polypeptide: Acetyl-coenzyme A carboxylase carboxyl transferase subunit beta (282 aa).

Residues 25 to 282 enclose the CoA carboxyltransferase N-terminal domain; the sequence is VWRKCPHCNE…SQMLRIFMKQ (258 aa). Positions 29, 32, 48, and 51 each coordinate Zn(2+). The segment at 29–51 adopts a C4-type zinc-finger fold; it reads CPHCNEIIYAKEIERNLNVCPKC.

Belongs to the AccD/PCCB family. As to quaternary structure, acetyl-CoA carboxylase is a heterohexamer composed of biotin carboxyl carrier protein (AccB), biotin carboxylase (AccC) and two subunits each of ACCase subunit alpha (AccA) and ACCase subunit beta (AccD). Zn(2+) is required as a cofactor.

It is found in the cytoplasm. The enzyme catalyses N(6)-carboxybiotinyl-L-lysyl-[protein] + acetyl-CoA = N(6)-biotinyl-L-lysyl-[protein] + malonyl-CoA. Its pathway is lipid metabolism; malonyl-CoA biosynthesis; malonyl-CoA from acetyl-CoA: step 1/1. Functionally, component of the acetyl coenzyme A carboxylase (ACC) complex. Biotin carboxylase (BC) catalyzes the carboxylation of biotin on its carrier protein (BCCP) and then the CO(2) group is transferred by the transcarboxylase to acetyl-CoA to form malonyl-CoA. The polypeptide is Acetyl-coenzyme A carboxylase carboxyl transferase subunit beta (Syntrophotalea carbinolica (strain DSM 2380 / NBRC 103641 / GraBd1) (Pelobacter carbinolicus)).